A 201-amino-acid chain; its full sequence is Small ribosomal subunit protein uS4c (201 aa).

The disordered stretch occupies residues 20-43 (GLTNKRPKSRNDPTNQSSSRKISQ). Residues 31–41 (DPTNQSSSRKI) show a composition bias toward polar residues. In terms of domain architecture, S4 RNA-binding spans 89–157 (MRLDNIIFRL…IGKNLDLSQK (69 aa)).

It belongs to the universal ribosomal protein uS4 family. Part of the 30S ribosomal subunit. Contacts protein S5. The interaction surface between S4 and S5 is involved in control of translational fidelity.

The protein resides in the plastid. It localises to the chloroplast. Functionally, one of the primary rRNA binding proteins, it binds directly to 16S rRNA where it nucleates assembly of the body of the 30S subunit. With S5 and S12 plays an important role in translational accuracy. This Cycas taitungensis (Prince sago) protein is Small ribosomal subunit protein uS4c (rps4).